The sequence spans 205 residues: Retron Vc95 putative HNH endonuclease (205 aa).

In terms of biological role, putative HNH endonuclease component of antiviral defense system retron Vc95, composed of a non-coding RNA (ncRNA), a reverse transcriptase (RT), a probable ATP-binding protein and this protein. Expression of retron Vc95 confers protection against bacteriophages T2, T4 and T6. At multiplicity of infection (MOI) of 0.02 cultures slow growth when infected with T4 but do not collapse, at MOI 2 cultures enter growth stasis. The sequence is that of Retron Vc95 putative HNH endonuclease from Vibrio cholerae serotype O1 biovar El Tor.